The primary structure comprises 555 residues: MTKEHWSEVKAREVTEHCRKHADELPDEIVVASGASTSGRLHVGNARDVLTADAVARVLRERYHEDVRVVWISDDVDPLRRIPRDLDGRLSEDYLGVPYKAIPVGDEPYSDRWARNFVEELREFGAEVEWISSAELYTDNGFVKLVREVVNDYYGGGGRLASVLERFGLEDARVYMPVCEECGRIATTRVVDVDGWRIEYVCEGRHEIGDAVLEGCGHRGELDLRKPIEVNGFEIPPGKLGWKIEWPTRWVYLGVACEPFGKDHYVAGGSYEVGSAIAEEFFGFPAPVPVPYEWITLDGKAMSSSKGHYVTLSDWGEVCHREVLRYLVLRGKPLKHLDLDLRFGLLQAVDDYDELEKRYFAGEADERERRIYELSRVDEIPEECPPHVPFRFCAVVAQVVGIEDDVSEEEFERALEIFRRTGHLEAEPEGFGREWLRERLEKASRWVDRYAPEEARFRVREEPEPVELSDKEREFLEDLVRRLESETTKEDPETLQRTVFEAARTAGLRPADAFRVFYNVVVGKDRGPRAGTLIAAVGVDRISRLIRGCLEASED.

The short motif at 37 to 45 (TSGRLHVGN) is the 'HIGH' region element. The short motif at 301-305 (AMSSS) is the 'KMSKS' region element.

Belongs to the class-I aminoacyl-tRNA synthetase family.

Its subcellular location is the cytoplasm. It catalyses the reaction tRNA(Lys) + L-lysine + ATP = L-lysyl-tRNA(Lys) + AMP + diphosphate. The polypeptide is Lysine--tRNA ligase (Methanopyrus kandleri (strain AV19 / DSM 6324 / JCM 9639 / NBRC 100938)).